The chain runs to 309 residues: Ribosomal RNA small subunit methyltransferase H (309 aa).

Residues 32–34, Asp-52, Phe-79, Asp-100, and Gln-107 each bind S-adenosyl-L-methionine; that span reads AGH.

Belongs to the methyltransferase superfamily. RsmH family.

The protein localises to the cytoplasm. It catalyses the reaction cytidine(1402) in 16S rRNA + S-adenosyl-L-methionine = N(4)-methylcytidine(1402) in 16S rRNA + S-adenosyl-L-homocysteine + H(+). Functionally, specifically methylates the N4 position of cytidine in position 1402 (C1402) of 16S rRNA. The protein is Ribosomal RNA small subunit methyltransferase H of Mycoplasma capricolum subsp. capricolum (strain California kid / ATCC 27343 / NCTC 10154).